The chain runs to 720 residues: Aminopeptidase RNPEPL1 (720 aa).

Residue 321-325 participates in substrate binding; sequence VAMEN. His348 is a Zn(2+) binding site. Residue Glu349 is the Proton acceptor of the active site. 2 residues coordinate Zn(2+): His352 and Glu371. The segment at 671–708 is disordered; it reads GLGPSAEPSTEPSTDLGGAEADTNPDSPALLLGDEAPS.

This sequence belongs to the peptidase M1 family. Zn(2+) serves as cofactor.

It carries out the reaction Release of N-terminal amino acids, preferentially methionine, from peptides and arylamides.. Functionally, broad specificity aminopeptidase which preferentially hydrolyzes an N-terminal methionine, citrulline or glutamine. This is Aminopeptidase RNPEPL1 from Mus musculus (Mouse).